The sequence spans 168 residues: uncharacterized protein (168 aa).

Residues 5-24 (IAWASACLLLVMLTGFFTIG) traverse the membrane as a helical segment.

It localises to the membrane. This is an uncharacterized protein from Bacillus subtilis (strain 168).